Reading from the N-terminus, the 237-residue chain is Uridylate kinase (237 aa).

12–15 lines the ATP pocket; the sequence is KLSG. The segment at 20-25 is involved in allosteric activation by GTP; it reads GENGFG. Gly-54 serves as a coordination point for UMP. 2 residues coordinate ATP: Gly-55 and Arg-59. UMP is bound by residues Asp-72 and 133–140; that span reads TGNPYFST. 2 residues coordinate ATP: Tyr-166 and Asp-169.

The protein belongs to the UMP kinase family. In terms of assembly, homohexamer.

It localises to the cytoplasm. It carries out the reaction UMP + ATP = UDP + ADP. It functions in the pathway pyrimidine metabolism; CTP biosynthesis via de novo pathway; UDP from UMP (UMPK route): step 1/1. Its activity is regulated as follows. Allosterically activated by GTP. Inhibited by UTP. Functionally, catalyzes the reversible phosphorylation of UMP to UDP. The sequence is that of Uridylate kinase from Clostridium perfringens (strain SM101 / Type A).